We begin with the raw amino-acid sequence, 619 residues long: MIYSGDVQRIEPAPVAGPAPLDVAHLILAGFDRHYALFRYSAQRAKSLFESGDWHGMQRLSRERIEYYDMRVRECATQLDSALRGSDARTADGSRANGSAALSEAQTAFWQAVKQEFVGLLADHRQPECAETFFNSVSCRILHRDYFHNDFLFVRPAIATDYLDSRIPSYRVYYPVAEGLHKSLIRMVADFGLAVPYADLPRDARLLARAAVRQLRGQLPRHAGPRLASDCQIQVLGSLFFRNTGAYIVGRLINQGTVYPFAVALRRNPAGQVCLDALLLGADDLSTLFSFTRAYFLVDMETPAAVVNFLASLLPRKPKAELYTMLGLQKQGKTLFYRDFLHHLTHSRDAFDIAPGIRGMVMCVFTLPSYPYVFKLIKDRIDKDGMDHATVRRKYQMVKLHDRVGRMADTWEYSQVALPRSRFAPRLLEELRRLVPSLIEENGDTVVIRHVYIERRMMPLNLYLRHASDPLLEVAVREYGDAIRQLATANIFPGDMLYKNFGVTRLGRVVFYDYDEIQRMTEMNFRAIPPAPNEEAELSSEPWYAVGPNDVFPEEFGRFLLGDPRVRQAFLRHHADLLAPQWWQACRARVAQGRIEEFFPYDTDRRLHPQAAPPPRTAA.

ATP is bound by residues 354–360 (APGIRGM) and Lys-375. The active site involves Asp-409.

Belongs to the AceK family.

It localises to the cytoplasm. It carries out the reaction L-seryl-[isocitrate dehydrogenase] + ATP = O-phospho-L-seryl-[isocitrate dehydrogenase] + ADP + H(+). Functionally, bifunctional enzyme which can phosphorylate or dephosphorylate isocitrate dehydrogenase (IDH) on a specific serine residue. This is a regulatory mechanism which enables bacteria to bypass the Krebs cycle via the glyoxylate shunt in response to the source of carbon. When bacteria are grown on glucose, IDH is fully active and unphosphorylated, but when grown on acetate or ethanol, the activity of IDH declines drastically concomitant with its phosphorylation. The polypeptide is Isocitrate dehydrogenase kinase/phosphatase (Bordetella bronchiseptica (strain ATCC BAA-588 / NCTC 13252 / RB50) (Alcaligenes bronchisepticus)).